Consider the following 621-residue polypeptide: Chaperone protein HtpG (621 aa).

The interval 1–328 (MTQEKKKFDA…SEDLPLNISR (328 aa)) is a; substrate-binding. The interval 329–544 (ESLQHNNVLE…DTAMDIRMER (216 aa)) is b. Positions 545 to 621 (FLIEQKQIAS…LNDILQKAIL (77 aa)) are c.

The protein belongs to the heat shock protein 90 family. Homodimer.

It localises to the cytoplasm. Functionally, molecular chaperone. Has ATPase activity. The protein is Chaperone protein HtpG of Rickettsia typhi (strain ATCC VR-144 / Wilmington).